Here is a 540-residue protein sequence, read N- to C-terminus: DEAD-box ATP-dependent RNA helicase 57 (540 aa).

The tract at residues 24 to 73 (DFARFRQGPPAPDVASAAAPSPEKKRKRQSKAKAKKSKKRRAEGADSASD) is disordered. The span at 47 to 64 (KKRKRQSKAKAKKSKKRR) shows a compositional bias: basic residues. Positions 101–129 (KSEDSEVVRRRKEVEREIERAAILRKKFD) form a coiled coil. A Q motif motif is present at residues 146–174 (ELVSRYGCDSYLVGNLSKLGFQEPTPIQR). The 171-residue stretch at 177–347 (IPILLSGREC…RTIMHDAVRV (171 aa)) folds into the Helicase ATP-binding domain. 190–197 (APTGSGKT) contributes to the ATP binding site. Residues 294–297 (DESD) carry the DEAD box motif. The Helicase C-terminal domain occupies 375-519 (ALRQSFAESL…EVPSWIKALP (145 aa)).

Belongs to the DEAD box helicase family. DDX52/ROK1 subfamily.

The catalysed reaction is ATP + H2O = ADP + phosphate + H(+). This is DEAD-box ATP-dependent RNA helicase 57 from Oryza sativa subsp. japonica (Rice).